The primary structure comprises 514 residues: Ankyrin repeat domain-containing protein 34B (514 aa).

ANK repeat units follow at residues 9 to 38 (SEGN…YINE), 42 to 79 (RGET…DPNI), 83 to 113 (SGKT…DLSL), and 117 to 146 (SSYS…AKGK). The tract at residues 220 to 249 (NDDTWDPGSPVRKPALAPKGPKLPHAPPWV) is disordered. Position 263 is a phosphoserine (S263). Position 272 is a phosphothreonine (T272). S296 carries the phosphoserine modification.

Belongs to the ANKRD34 family. Post-translationally, phosphorylated.

It localises to the cytoplasm. The protein localises to the nucleus. The sequence is that of Ankyrin repeat domain-containing protein 34B (ANKRD34B) from Homo sapiens (Human).